We begin with the raw amino-acid sequence, 547 residues long: Isoflavonoid 7-O-beta-apiosyl-glucoside beta-glycosidase (547 aa).

The signal sequence occupies residues M1–R31. Q59 is an a beta-D-glucoside binding site. Residues N72 and N132 are each glycosylated (N-linked (GlcNAc...) asparagine). An a beta-D-glucoside-binding site is contributed by H159. N-linked (GlcNAc...) asparagine glycosylation is present at N175. A beta-D-glucoside is bound at residue N204–E205. The active-site Proton donor is E205. C224 and C232 are joined by a disulfide. N285 carries N-linked (GlcNAc...) asparagine glycosylation. Residues Y348, E419, W468, E475–W476, and F484 contribute to the a beta-D-glucoside site. E419 functions as the Nucleophile in the catalytic mechanism. N490 carries an N-linked (GlcNAc...) asparagine glycan.

Belongs to the glycosyl hydrolase 1 family. As to quaternary structure, homotetramer.

The enzyme catalyses 7-[beta-D-apiofuranosyl-(1-&gt;6)-beta-D-glucopyranosyloxy]isoflavonoid + H2O = a 7-hydroxyisoflavonoid + beta-D-apiofuranosyl-(1-&gt;6)-D-glucose.. With respect to regulation, not inhibited by iron, calcium, mercury, manganese, zinc or EDTA. In terms of biological role, hydrolyzes dalpatein 7-O-beta-D-apiofuranosyl-(1-&gt;6)-beta-D-glucopyranoside and dalnigrein 7-O-beta-D-apiofuranosyl-(1-&gt;6)-beta-D-glucopyranoside. Also has activity towards pNP-beta-D-fucoside and pNP-beta-D-glucoside, but not pNP-beta-cellobioside. In Dalbergia nigrescens (Thai blackwood), this protein is Isoflavonoid 7-O-beta-apiosyl-glucoside beta-glycosidase.